The chain runs to 94 residues: Small ribosomal subunit protein uS19 (94 aa).

The protein belongs to the universal ribosomal protein uS19 family.

Its function is as follows. Protein S19 forms a complex with S13 that binds strongly to the 16S ribosomal RNA. The chain is Small ribosomal subunit protein uS19 from Wolbachia sp. subsp. Brugia malayi (strain TRS).